Here is a 450-residue protein sequence, read N- to C-terminus: UDP-N-acetylmuramoylalanine--D-glutamate ligase (450 aa).

Gly118–Thr124 is an ATP binding site.

Belongs to the MurCDEF family.

It is found in the cytoplasm. It carries out the reaction UDP-N-acetyl-alpha-D-muramoyl-L-alanine + D-glutamate + ATP = UDP-N-acetyl-alpha-D-muramoyl-L-alanyl-D-glutamate + ADP + phosphate + H(+). Its pathway is cell wall biogenesis; peptidoglycan biosynthesis. Its function is as follows. Cell wall formation. Catalyzes the addition of glutamate to the nucleotide precursor UDP-N-acetylmuramoyl-L-alanine (UMA). This chain is UDP-N-acetylmuramoylalanine--D-glutamate ligase, found in Pseudomonas putida (strain ATCC 47054 / DSM 6125 / CFBP 8728 / NCIMB 11950 / KT2440).